We begin with the raw amino-acid sequence, 169 residues long: Der GTPase-activating protein YihI (169 aa).

Disordered stretches follow at residues 1–98 (MKPS…PQAE) and 144–169 (GLSY…LRGN). The span at 10 to 19 (SKGHAKARRK) shows a compositional bias: basic residues. The segment covering 20 to 30 (TREELDQEARD) has biased composition (basic and acidic residues). Residues 31-40 (RKRQKKRRGH) are compositionally biased toward basic residues. Polar residues predominate over residues 49–58 (GNTTSGSKGQ). The segment covering 147-159 (YDDDEEEEEDEKQ) has biased composition (acidic residues). A compositionally biased stretch (basic and acidic residues) spans 160-169 (EDMMRLLRGN).

Belongs to the YihI family. As to quaternary structure, interacts with Der.

Its function is as follows. A GTPase-activating protein (GAP) that modifies Der/EngA GTPase function. May play a role in ribosome biogenesis. This Escherichia coli O139:H28 (strain E24377A / ETEC) protein is Der GTPase-activating protein YihI.